A 414-amino-acid chain; its full sequence is 2,3-diketo-5-methylthiopentyl-1-phosphate enolase (414 aa).

Lysine 99 functions as the Proton acceptor in the catalytic mechanism. Residues lysine 148, 174–177 (KDDE), histidine 265, glycine 338, and 360–361 (GG) each bind substrate. The Mg(2+) site is built by lysine 174, aspartate 176, and glutamate 177. An N6-carboxylysine modification is found at lysine 174.

Belongs to the RuBisCO large chain family. Type IV subfamily. Homodimer. Mg(2+) is required as a cofactor.

It catalyses the reaction 5-methylsulfanyl-2,3-dioxopentyl phosphate = 2-hydroxy-5-methylsulfanyl-3-oxopent-1-enyl phosphate. It functions in the pathway amino-acid biosynthesis; L-methionine biosynthesis via salvage pathway; L-methionine from S-methyl-5-thio-alpha-D-ribose 1-phosphate: step 3/6. Catalyzes the enolization of 2,3-diketo-5-methylthiopentyl-1-phosphate (DK-MTP-1-P) into 2-hydroxy-3-keto-5-methylthiopentenyl-1-phosphate (HK-MTPenyl-1-P). The protein is 2,3-diketo-5-methylthiopentyl-1-phosphate enolase of Bacillus cereus (strain Q1).